Consider the following 160-residue polypeptide: uncharacterized protein (160 aa).

The protein resides in the cytoplasm. The protein localises to the nucleus. This is an uncharacterized protein from Schizosaccharomyces pombe (strain 972 / ATCC 24843) (Fission yeast).